Here is a 359-residue protein sequence, read N- to C-terminus: NADH-quinone oxidoreductase subunit H (359 aa).

8 helical membrane passes run 19–39, 94–114, 127–147, 166–186, 202–222, 266–286, 301–321, and 337–357; these read IGWF…FIAL, FLFV…FAVL, VGLF…LAAG, IVSY…LAGT, FMHW…IYFI, MFMV…SPLP, VWGA…QMWL, and CWKV…IWVI.

It belongs to the complex I subunit 1 family. As to quaternary structure, NDH-1 is composed of 14 different subunits. Subunits NuoA, H, J, K, L, M, N constitute the membrane sector of the complex.

It is found in the cell inner membrane. The catalysed reaction is a quinone + NADH + 5 H(+)(in) = a quinol + NAD(+) + 4 H(+)(out). Functionally, NDH-1 shuttles electrons from NADH, via FMN and iron-sulfur (Fe-S) centers, to quinones in the respiratory chain. The immediate electron acceptor for the enzyme in this species is believed to be ubiquinone. Couples the redox reaction to proton translocation (for every two electrons transferred, four hydrogen ions are translocated across the cytoplasmic membrane), and thus conserves the redox energy in a proton gradient. This subunit may bind ubiquinone. The polypeptide is NADH-quinone oxidoreductase subunit H (Chlorobaculum parvum (strain DSM 263 / NCIMB 8327) (Chlorobium vibrioforme subsp. thiosulfatophilum)).